The sequence spans 443 residues: tRNA modification GTPase MnmE (443 aa).

Arg-23, Glu-82, and Lys-121 together coordinate (6S)-5-formyl-5,6,7,8-tetrahydrofolate. Residues 215 to 364 form the TrmE-type G domain; sequence GTSIVLAGHP…LKQFIQKWMQ (150 aa). K(+) is bound at residue Asn-225. Residues 225–230, 244–250, and 269–272 contribute to the GTP site; these read NVGKSS, TDIPGTT, and DSAG. Ser-229 is a Mg(2+) binding site. K(+) contacts are provided by Thr-244, Ile-246, and Thr-249. A Mg(2+)-binding site is contributed by Thr-250. Lys-443 is a binding site for (6S)-5-formyl-5,6,7,8-tetrahydrofolate.

This sequence belongs to the TRAFAC class TrmE-Era-EngA-EngB-Septin-like GTPase superfamily. TrmE GTPase family. In terms of assembly, homodimer. Heterotetramer of two MnmE and two MnmG subunits. The cofactor is K(+).

It is found in the cytoplasm. In terms of biological role, exhibits a very high intrinsic GTPase hydrolysis rate. Involved in the addition of a carboxymethylaminomethyl (cmnm) group at the wobble position (U34) of certain tRNAs, forming tRNA-cmnm(5)s(2)U34. The protein is tRNA modification GTPase MnmE of Chlamydia caviae (strain ATCC VR-813 / DSM 19441 / 03DC25 / GPIC) (Chlamydophila caviae).